Reading from the N-terminus, the 426-residue chain is Chaperone SurA (426 aa).

Residues 1–13 (MLGALFLSTAASA) form the signal peptide. PpiC domains follow at residues 164–265 (SEEL…KLLD) and 274–373 (RDEV…EVLG).

Its subcellular location is the periplasm. It catalyses the reaction [protein]-peptidylproline (omega=180) = [protein]-peptidylproline (omega=0). Its function is as follows. Chaperone involved in the correct folding and assembly of outer membrane proteins. Recognizes specific patterns of aromatic residues and the orientation of their side chains, which are found more frequently in integral outer membrane proteins. May act in both early periplasmic and late outer membrane-associated steps of protein maturation. The protein is Chaperone SurA of Pseudomonas fluorescens (strain ATCC BAA-477 / NRRL B-23932 / Pf-5).